The primary structure comprises 97 residues: Co-chaperonin GroES (97 aa).

It belongs to the GroES chaperonin family. In terms of assembly, heptamer of 7 subunits arranged in a ring. Interacts with the chaperonin GroEL.

The protein resides in the cytoplasm. Together with the chaperonin GroEL, plays an essential role in assisting protein folding. The GroEL-GroES system forms a nano-cage that allows encapsulation of the non-native substrate proteins and provides a physical environment optimized to promote and accelerate protein folding. GroES binds to the apical surface of the GroEL ring, thereby capping the opening of the GroEL channel. This is Co-chaperonin GroES from Pectobacterium atrosepticum (strain SCRI 1043 / ATCC BAA-672) (Erwinia carotovora subsp. atroseptica).